The primary structure comprises 127 residues: MSIPKELRYSQEHEWVRVEGNTVRIGITDFAQSELGDIVFVELPEVGAQLTANEPFGSVESVKTVSELYAPISGKVVAVNEELNDNPEYVNESPYDKAWMIVIEPSDLSEVDNLLTAEQYEQMINQD.

Residues 22-104 (TVRIGITDFA…YDKAWMIVIE (83 aa)) form the Lipoyl-binding domain. K63 bears the N6-lipoyllysine mark.

This sequence belongs to the GcvH family. In terms of assembly, the glycine cleavage system is composed of four proteins: P, T, L and H. The cofactor is (R)-lipoate.

The glycine cleavage system catalyzes the degradation of glycine. The H protein shuttles the methylamine group of glycine from the P protein to the T protein. Its function is as follows. Is also involved in protein lipoylation via its role as an octanoyl/lipoyl carrier protein intermediate. The protein is Glycine cleavage system H protein of Anoxybacillus flavithermus (strain DSM 21510 / WK1).